Consider the following 122-residue polypeptide: Large ribosomal subunit protein uL14 (122 aa).

It belongs to the universal ribosomal protein uL14 family. Part of the 50S ribosomal subunit. Forms a cluster with proteins L3 and L19. In the 70S ribosome, L14 and L19 interact and together make contacts with the 16S rRNA in bridges B5 and B8.

Functionally, binds to 23S rRNA. Forms part of two intersubunit bridges in the 70S ribosome. The polypeptide is Large ribosomal subunit protein uL14 (Mycoplasma mobile (strain ATCC 43663 / 163K / NCTC 11711) (Mesomycoplasma mobile)).